A 432-amino-acid chain; its full sequence is Heme-based aerotactic transducer HemAT (432 aa).

A Methyl-accepting transducer domain is found at 184–420 (YNQTRDEQEE…EVSRAVSHVA (237 aa)).

Belongs to the methyl-accepting chemotaxis (MCP) protein family. Homotetramer.

Functionally, heme-containing signal transducer responsible for aerotaxis, the migratory response toward or away from oxygen. The protein is Heme-based aerotactic transducer HemAT (hemAT) of Bacillus subtilis (strain 168).